The primary structure comprises 379 residues: tRNA(Met) cytidine acetate ligase (379 aa).

ATP contacts are provided by residues 8–21 (IAEF…HEYL), Gly-97, Asn-153, and Arg-176.

It belongs to the TmcAL family.

Its subcellular location is the cytoplasm. The catalysed reaction is cytidine(34) in elongator tRNA(Met) + acetate + ATP = N(4)-acetylcytidine(34) in elongator tRNA(Met) + AMP + diphosphate. Functionally, catalyzes the formation of N(4)-acetylcytidine (ac(4)C) at the wobble position of elongator tRNA(Met), using acetate and ATP as substrates. First activates an acetate ion to form acetyladenylate (Ac-AMP) and then transfers the acetyl group to tRNA to form ac(4)C34. The polypeptide is tRNA(Met) cytidine acetate ligase (Lactococcus lactis subsp. cremoris (strain MG1363)).